Here is a 277-residue protein sequence, read N- to C-terminus: Putative envelope-preserving system protein Rv2742c (277 aa).

Positions 31 to 54 (RDENRQRHAQVDVQRRRDQPERGQ) are enriched in basic and acidic residues. Disordered stretches follow at residues 31–70 (RDEN…PDGR), 113–133 (QGSP…RLGR), and 180–210 (RQGS…HTAD). Residues 116 to 133 (PRRRERRRGQTAHQRLGR) are compositionally biased toward basic residues.

Interacts with Rv2743c.

Involved in preservation of envelope integrity and tolerance to surface stress. Reverses the inhibitory effect of PspA on ClgR activity. Facilitates intracellular growth of M.tuberculosis. The protein is Putative envelope-preserving system protein Rv2742c of Mycobacterium tuberculosis (strain ATCC 25618 / H37Rv).